The primary structure comprises 204 residues: GTP cyclohydrolase-2 (204 aa).

Residue 49–53 (RIHSE) coordinates GTP. Zn(2+) contacts are provided by Cys-54, Cys-65, and Cys-67. Residues Gln-70, 92 to 94 (EGR), and Thr-114 each bind GTP. Asp-126 (proton acceptor) is an active-site residue. Catalysis depends on Arg-128, which acts as the Nucleophile. Residues Thr-149 and Lys-154 each contribute to the GTP site.

Belongs to the GTP cyclohydrolase II family. It depends on Zn(2+) as a cofactor.

It carries out the reaction GTP + 4 H2O = 2,5-diamino-6-hydroxy-4-(5-phosphoribosylamino)-pyrimidine + formate + 2 phosphate + 3 H(+). The protein operates within cofactor biosynthesis; riboflavin biosynthesis; 5-amino-6-(D-ribitylamino)uracil from GTP: step 1/4. Its function is as follows. Catalyzes the conversion of GTP to 2,5-diamino-6-ribosylamino-4(3H)-pyrimidinone 5'-phosphate (DARP), formate and pyrophosphate. The polypeptide is GTP cyclohydrolase-2 (Shewanella baltica (strain OS155 / ATCC BAA-1091)).